Here is a 373-residue protein sequence, read N- to C-terminus: Dual-specificity RNA methyltransferase RlmN (373 aa).

The Proton acceptor role is filled by E94. In terms of domain architecture, Radical SAM core spans 100-339 (EDDRATLCVS…VIVRKTRGDD (240 aa)). Residues C107 and C344 are joined by a disulfide bond. Positions 114, 118, and 121 each coordinate [4Fe-4S] cluster. S-adenosyl-L-methionine-binding positions include 168-169 (GE), S200, 222-224 (SIH), and N301. Catalysis depends on C344, which acts as the S-methylcysteine intermediate.

Belongs to the radical SAM superfamily. RlmN family. [4Fe-4S] cluster serves as cofactor.

It is found in the cytoplasm. It catalyses the reaction adenosine(2503) in 23S rRNA + 2 reduced [2Fe-2S]-[ferredoxin] + 2 S-adenosyl-L-methionine = 2-methyladenosine(2503) in 23S rRNA + 5'-deoxyadenosine + L-methionine + 2 oxidized [2Fe-2S]-[ferredoxin] + S-adenosyl-L-homocysteine. It carries out the reaction adenosine(37) in tRNA + 2 reduced [2Fe-2S]-[ferredoxin] + 2 S-adenosyl-L-methionine = 2-methyladenosine(37) in tRNA + 5'-deoxyadenosine + L-methionine + 2 oxidized [2Fe-2S]-[ferredoxin] + S-adenosyl-L-homocysteine. In terms of biological role, specifically methylates position 2 of adenine 2503 in 23S rRNA and position 2 of adenine 37 in tRNAs. m2A2503 modification seems to play a crucial role in the proofreading step occurring at the peptidyl transferase center and thus would serve to optimize ribosomal fidelity. This chain is Dual-specificity RNA methyltransferase RlmN, found in Shewanella sp. (strain MR-4).